The chain runs to 287 residues: Nucleotide-binding protein Hhal_2130 (287 aa).

An ATP-binding site is contributed by 11 to 18 (GLSGSGKS). A GTP-binding site is contributed by 63–66 (DARN).

This sequence belongs to the RapZ-like family.

Displays ATPase and GTPase activities. This chain is Nucleotide-binding protein Hhal_2130, found in Halorhodospira halophila (strain DSM 244 / SL1) (Ectothiorhodospira halophila (strain DSM 244 / SL1)).